The sequence spans 591 residues: Putative BTB/POZ domain-containing protein At5g13600 (591 aa).

In terms of domain architecture, BTB spans 28–95; that stretch reads PDVMIQVVDE…CYGVRIEVTP (68 aa). The 286-residue stretch at 208-493 folds into the NPH3 domain; that stretch reads NWWFNDVSSF…VQVLFFEQMR (286 aa). At Tyr-434 the chain carries Phosphotyrosine.

The protein belongs to the NPH3 family.

It participates in protein modification; protein ubiquitination. Functionally, may act as a substrate-specific adapter of an E3 ubiquitin-protein ligase complex (CUL3-RBX1-BTB) which mediates the ubiquitination and subsequent proteasomal degradation of target proteins. The protein is Putative BTB/POZ domain-containing protein At5g13600 of Arabidopsis thaliana (Mouse-ear cress).